A 174-amino-acid polypeptide reads, in one-letter code: Probable phenolic acid decarboxylase (174 aa).

This sequence belongs to the PadC family.

Its function is as follows. Catalyzes the decarboxylation of phenolic acids. The protein is Probable phenolic acid decarboxylase (padC) of Vibrio cholerae serotype O1 (strain ATCC 39315 / El Tor Inaba N16961).